We begin with the raw amino-acid sequence, 451 residues long: Tubulin alpha-2 chain (451 aa).

Gln11 is a binding site for GTP. Residue Lys40 is modified to N6-acetyllysine. The GTP site is built by Glu71, Ser140, Gly144, Thr145, Thr179, Asn206, and Asn228. Mg(2+) is bound at residue Glu71. Residue Glu254 is part of the active site. The segment at 432 to 451 (YEEVGIDTADGEDDEEANDY) is disordered.

The protein belongs to the tubulin family. Dimer of alpha and beta chains. A typical microtubule is a hollow water-filled tube with an outer diameter of 25 nm and an inner diameter of 15 nM. Alpha-beta heterodimers associate head-to-tail to form protofilaments running lengthwise along the microtubule wall with the beta-tubulin subunit facing the microtubule plus end conferring a structural polarity. Microtubules usually have 13 protofilaments but different protofilament numbers can be found in some organisms and specialized cells. Mg(2+) serves as cofactor. Post-translationally, undergoes a tyrosination/detyrosination cycle, the cyclic removal and re-addition of a C-terminal tyrosine residue by the enzymes tubulin tyrosine carboxypeptidase (TTCP) and tubulin tyrosine ligase (TTL), respectively. Acetylation of alpha chains at Lys-40 stabilizes microtubules and affects affinity and processivity of microtubule motors. This modification has a role in multiple cellular functions, ranging from cell motility, cell cycle progression or cell differentiation to intracellular trafficking and signaling.

The protein localises to the cytoplasm. It is found in the cytoskeleton. It catalyses the reaction GTP + H2O = GDP + phosphate + H(+). Tubulin is the major constituent of microtubules, a cylinder consisting of laterally associated linear protofilaments composed of alpha- and beta-tubulin heterodimers. Microtubules grow by the addition of GTP-tubulin dimers to the microtubule end, where a stabilizing cap forms. Below the cap, tubulin dimers are in GDP-bound state, owing to GTPase activity of alpha-tubulin. In Homarus americanus (American lobster), this protein is Tubulin alpha-2 chain.